A 340-amino-acid polypeptide reads, in one-letter code: Nicotianamine synthase 9 (340 aa).

It belongs to the nicotianamine synthase (NAS)-like family. In terms of assembly, homotrimer.

It carries out the reaction 3 S-adenosyl-L-methionine = nicotianamine + 3 S-methyl-5'-thioadenosine + 3 H(+). In terms of biological role, synthesizes nicotianamine, a polyamine that is the first intermediate in the synthesis of the phytosiderophores of the mugineic acid type found in gramineae which serves as a sensor for the physiological iron status within the plant, and/or might be involved in the transport of iron. This Hordeum vulgare (Barley) protein is Nicotianamine synthase 9 (NAS9).